The following is a 643-amino-acid chain: Phosphomethylpyrimidine synthase (643 aa).

Residues asparagine 248, methionine 277, tyrosine 306, histidine 342, 362-364 (SRG), 403-406 (DGLR), and glutamate 442 contribute to the substrate site. Histidine 446 is a binding site for Zn(2+). Tyrosine 469 contacts substrate. Histidine 510 serves as a coordination point for Zn(2+). [4Fe-4S] cluster contacts are provided by cysteine 590, cysteine 593, and cysteine 598.

Belongs to the ThiC family. Homodimer. [4Fe-4S] cluster is required as a cofactor.

The catalysed reaction is 5-amino-1-(5-phospho-beta-D-ribosyl)imidazole + S-adenosyl-L-methionine = 4-amino-2-methyl-5-(phosphooxymethyl)pyrimidine + CO + 5'-deoxyadenosine + formate + L-methionine + 3 H(+). It participates in cofactor biosynthesis; thiamine diphosphate biosynthesis. In terms of biological role, catalyzes the synthesis of the hydroxymethylpyrimidine phosphate (HMP-P) moiety of thiamine from aminoimidazole ribotide (AIR) in a radical S-adenosyl-L-methionine (SAM)-dependent reaction. This Burkholderia ambifaria (strain ATCC BAA-244 / DSM 16087 / CCUG 44356 / LMG 19182 / AMMD) (Burkholderia cepacia (strain AMMD)) protein is Phosphomethylpyrimidine synthase.